We begin with the raw amino-acid sequence, 263 residues long: Type III pantothenate kinase (263 aa).

9–16 (DIGNTNVK) lines the ATP pocket. Substrate contacts are provided by residues Y103 and 110-113 (GADR). The Proton acceptor role is filled by D112. Residue D134 participates in K(+) binding. T137 lines the ATP pocket. T190 contacts substrate.

This sequence belongs to the type III pantothenate kinase family. Homodimer. NH4(+) is required as a cofactor. The cofactor is K(+).

Its subcellular location is the cytoplasm. It carries out the reaction (R)-pantothenate + ATP = (R)-4'-phosphopantothenate + ADP + H(+). It functions in the pathway cofactor biosynthesis; coenzyme A biosynthesis; CoA from (R)-pantothenate: step 1/5. In terms of biological role, catalyzes the phosphorylation of pantothenate (Pan), the first step in CoA biosynthesis. The sequence is that of Type III pantothenate kinase from Oleidesulfovibrio alaskensis (strain ATCC BAA-1058 / DSM 17464 / G20) (Desulfovibrio alaskensis).